Consider the following 280-residue polypeptide: DCN1-like protein 4 (280 aa).

The disordered stretch occupies residues 37 to 71; sequence GPESHGTACCSRAMPPRKKRRPTAGDDLSAKKSRQ. Residues 89–275 form the DCUN1 domain; that stretch reads FSSKRCLEWF…LLDEFVEWYK (187 aa).

May interact (via the DCUN1 domain) with unneddylated cullins.

The protein localises to the nucleus. Functionally, contributes to the neddylation of all cullins by transferring NEDD8 from N-terminally acetylated NEDD8-conjugating E2s enzyme to different cullin C-terminal domain-RBX complexes. The sequence is that of DCN1-like protein 4 from Danio rerio (Zebrafish).